A 385-amino-acid chain; its full sequence is MGNWLLPEGLADVLPAEARRIEELRRELLDLYRTYGFELVAPPLVEYIDSLLSSTGSDLNLRTCKLVDQLSGRTLGVRADMTSQVTRIDAHLLNRAGVTRLCYCGSVLHARPADLLSSRELLQIGAEIYGHAGFEADLEIIQLVMDTLATAGVRNARLDLCHSGVMRAIFDADPQASRHAGDLCTLLREKDVPGLAELASRVDGLGEDTVRALQALATLYGGPEIIARARRELPAVPGMAQALDALQALVDAMPGVTLSVDLADVGGYGYHSGVTFAVYGEDWHDALVRGGRYDDVSRAFGRARPATGFSLDLRKLAAGLTPAEPARAVRAPWGQDPALTDAVRRLRRSGEIVVQVLPGHEQGLDEFVCDRELALQDGAWTVRTL.

This sequence belongs to the class-II aminoacyl-tRNA synthetase family. HisZ subfamily. Heteromultimer composed of HisG and HisZ subunits.

The protein resides in the cytoplasm. The protein operates within amino-acid biosynthesis; L-histidine biosynthesis; L-histidine from 5-phospho-alpha-D-ribose 1-diphosphate: step 1/9. Required for the first step of histidine biosynthesis. May allow the feedback regulation of ATP phosphoribosyltransferase activity by histidine. This is ATP phosphoribosyltransferase regulatory subunit from Bordetella parapertussis (strain 12822 / ATCC BAA-587 / NCTC 13253).